The chain runs to 423 residues: Glucose-1-phosphate adenylyltransferase (423 aa).

Residues Y107, G172, 187–188 (EK), and S205 contribute to the alpha-D-glucose 1-phosphate site.

Belongs to the bacterial/plant glucose-1-phosphate adenylyltransferase family. Homotetramer.

The enzyme catalyses alpha-D-glucose 1-phosphate + ATP + H(+) = ADP-alpha-D-glucose + diphosphate. It functions in the pathway glycan biosynthesis; glycogen biosynthesis. Functionally, involved in the biosynthesis of ADP-glucose, a building block required for the elongation reactions to produce glycogen. Catalyzes the reaction between ATP and alpha-D-glucose 1-phosphate (G1P) to produce pyrophosphate and ADP-Glc. This Cereibacter sphaeroides (strain ATCC 17029 / ATH 2.4.9) (Rhodobacter sphaeroides) protein is Glucose-1-phosphate adenylyltransferase.